A 301-amino-acid polypeptide reads, in one-letter code: 2-phosphoglycerate kinase (301 aa).

The 88-residue stretch at isoleucine 2–valine 89 folds into the ATP-cone domain.

It belongs to the 2-phosphoglycerate kinase family. It depends on a divalent metal cation as a cofactor.

It carries out the reaction (2R)-2-phosphoglycerate + ATP = (2R)-2,3-bisphosphoglycerate + ADP + H(+). The protein operates within thermoadapter biosynthesis; cyclic 2,3-diphosphoglycerate biosynthesis; cyclic 2,3-diphosphoglycerate from 2-phospho-D-glycerate: step 1/2. Functionally, catalyzes the phosphorylation of 2-phosphoglycerate to 2,3-diphosphoglycerate. Involved in the biosynthesis of cyclic 2,3-bisphosphoglycerate, a thermoprotectant. The chain is 2-phosphoglycerate kinase from Pyrococcus horikoshii (strain ATCC 700860 / DSM 12428 / JCM 9974 / NBRC 100139 / OT-3).